Reading from the N-terminus, the 351-residue chain is CREB homolog crh-2 (351 aa).

Disordered regions lie at residues 46–104 and 119–149; these read EPCT…EPLG and SPSA…HQQQ. Positions 82–95 are enriched in low complexity; the sequence is GSSSGSPSSSLSSP. The region spanning 282 to 345 is the bZIP domain; the sequence is SLKIVRRKIK…RDLQQKLHQY (64 aa). The basic motif stretch occupies residues 284-304; sequence KIVRRKIKNKLSAQESRRKRK. The interval 307 to 314 is leucine-zipper; that stretch reads IDALEGRL.

Belongs to the bZIP family.

The protein resides in the nucleus. In terms of biological role, transcription factor. Plays a role in regulating the developmentally arrested larval state known as dauer, when induced by long-term exposure to the Gram-negative bacterium P.aeruginosa PAO1, but dispensable for dauer formation induced by starvation. Involved in regulating expression of microRNA mir-243, during long-term exposure to P.aeruginosa PAO1. The protein is CREB homolog crh-2 of Caenorhabditis elegans.